The following is a 130-amino-acid chain: Glycine cleavage system H protein (130 aa).

One can recognise a Lipoyl-binding domain in the interval Glu-24–Lys-106. Position 65 is an N6-lipoyllysine (Lys-65).

This sequence belongs to the GcvH family. The glycine cleavage system is composed of four proteins: P, T, L and H. (R)-lipoate is required as a cofactor.

Its function is as follows. The glycine cleavage system catalyzes the degradation of glycine. The H protein shuttles the methylamine group of glycine from the P protein to the T protein. This Photorhabdus laumondii subsp. laumondii (strain DSM 15139 / CIP 105565 / TT01) (Photorhabdus luminescens subsp. laumondii) protein is Glycine cleavage system H protein.